Consider the following 249-residue polypeptide: Probable GDP-mannose transporter 2 (249 aa).

The Lumenal portion of the chain corresponds to 1 to 15 (MIYTSSKSLQYLAVP). A helical transmembrane segment spans residues 16–36 (IYTIFKNLTIILIAYGEVLFF). The Cytoplasmic portion of the chain corresponds to 37–47 (GGKVTSMELTS). A helical transmembrane segment spans residues 48–68 (FIMMVLSSVVATWGDQQAIAI). Over 69–84 (KASSLEDLDQELVEST) the chain is Lumenal. The helical transmembrane segment at 85-105 (IFVLNPGYLWMFTNCISSALF) threads the bilayer. The Cytoplasmic portion of the chain corresponds to 106-122 (VLIMRKRIRLTNFKDYD). Residues 123–143 (TMFYNNVLALPLLLVFSFIME) form a helical membrane-spanning segment. Over 144–159 (DWSTKNLSVNLSADSL) the chain is Lumenal. Residues N149 and N153 are each glycosylated (N-linked (GlcNAc...) asparagine). Residues 160-180 (AAMVISGLMSVGISYCSGWCV) form a helical membrane-spanning segment. At 181–186 (RVTSST) the chain is on the cytoplasmic side. Residues 187–207 (TYSMVGALNKLPIALAGLVFF) form a helical membrane-spanning segment. The Lumenal portion of the chain corresponds to 208–211 (DAPK). A helical membrane pass occupies residues 212-232 (NFLSFFSIFLGFLSGLLYAVA). Residues 233-249 (KQKKIQQQKVLAATLEK) are Cytoplasmic-facing.

Belongs to the TPT transporter family. SLC35D subfamily.

It is found in the golgi apparatus membrane. The protein localises to the cytoplasmic vesicle membrane. Its subcellular location is the endoplasmic reticulum membrane. Involved in the import of GDP-mannose from the cytoplasm into the Golgi lumen. In Saccharomyces cerevisiae (strain RM11-1a) (Baker's yeast), this protein is Probable GDP-mannose transporter 2 (HVG1).